Here is a 353-residue protein sequence, read N- to C-terminus: Phenol hydroxylase P5 protein (353 aa).

The 2Fe-2S ferredoxin-type domain maps to 3-93; it reads YQVTIEPIGT…DMVIEADVDE (91 aa). Residues Cys-37, Cys-42, Cys-45, and Cys-77 each coordinate [2Fe-2S] cluster. In terms of domain architecture, FAD-binding FR-type spans 102 to 201; the sequence is VQDYQATVIE…SGPYGQFFVR (100 aa).

In terms of assembly, the multicomponent enzyme phenol hydroxylase is formed by P0, P1, P2, P3, P4 and P5 polypeptides. Requires FAD as cofactor. [2Fe-2S] cluster serves as cofactor.

It catalyses the reaction phenol + NADPH + O2 + H(+) = catechol + NADP(+) + H2O. The protein operates within aromatic compound metabolism; phenol degradation. Its function is as follows. Catabolizes phenol, and some of its methylated derivatives. P5 is required for growth on phenol, and for in vitro phenol hydroxylase activity. Functionally, probable electron transfer from NADPH, via FAD and the 2Fe-2S center, to the oxygenase activity site of the enzyme. The protein is Phenol hydroxylase P5 protein (mphP) of Acinetobacter pittii (strain PHEA-2).